The chain runs to 229 residues: MKSYGAEFLGTFWLVLGGCGSAVLAAGFPNLGIGFAGVALAFGLTVVTMAYAIGHISGCHLNPAVSIGLWAGGRFPAGQLAPYIVAQVLGAIAAGAVLYVIASGGAGFDVAKGFASNGYAEHSPGGYSLLAALVCEVVMTMFFLLVIMGATDKRAPAGFAPLAIGLALTLIHLISIPVTNTSVNPARSTGVALFVGGWAVQQLWLFWLAPIIGAVLGAKVYRLIAGESE.

The next 2 helical transmembrane spans lie at Phe-8–Phe-28 and Ile-33–Ile-53. An NPA 1 motif is present at residues Asn-62–Ala-64. Helical transmembrane passes span Val-88 to Phe-108, Leu-129 to Gly-149, and Gly-158 to Val-178. The short motif at Asn-184–Ala-186 is the NPA 2 element. Residues Ala-192 to Ile-212 traverse the membrane as a helical segment.

This sequence belongs to the MIP/aquaporin (TC 1.A.8) family. In terms of assembly, homotetramer.

The protein localises to the cell inner membrane. It carries out the reaction H2O(in) = H2O(out). Channel that permits osmotically driven movement of water in both directions. It is involved in the osmoregulation and in the maintenance of cell turgor during volume expansion in rapidly growing cells. It mediates rapid entry or exit of water in response to abrupt changes in osmolarity. The sequence is that of Aquaporin Z from Chromobacterium violaceum (strain ATCC 12472 / DSM 30191 / JCM 1249 / CCUG 213 / NBRC 12614 / NCIMB 9131 / NCTC 9757 / MK).